Here is a 577-residue protein sequence, read N- to C-terminus: MNIQALLSEKVSQAMIAAGAPADCEPQVRQSAKVQFGDYQANGMMAVAKKLGMAPRQLAEQVLTHLDLSGIASKVEIAGPGFINIFLEPAFLAEQVQQALASDRLGVSQPTRQTIVVDYSAPNVAKEMHVGHLRSTIIGDAAVRTLEFLGHHVIRANHVGDWGTQFGMLIAWLEKQQQENAGDMALADLEGFYRDAKKHYDEDEAFAERARNYVVKLQSGDTYFREMWRKLVDITMTQNQITYDRLNVTLTRDDVMGESLYNPMLPGIVADLKAKGLAVESEGATVVFLDEFKNKEGDPMGVIIQKKDGGYLYTTTDIACAKYRYETLHADRVLYYIDSRQHQHLMQAWTIVRKAGYVPDSVPLEHHMFGMMLGKDGKPFKTRAGGTVKLADLLDEALERARRLVAEKNPDMSADELEKLANAVGIGAVKYADLSKNRTTDYIFDWDNMLAFEGNTAPYMQYAYTRVLSVFRKADIDEQALASAPVIISEDREAQLAARLLQFEETLTVVAREGTPHVMCAYLYDVAGLFSGFYEHCPILSAENDAVRNSRLKLAQLTAKTLKLGLDTLGIETVERM.

The short motif at 122–132 (PNVAKEMHVGH) is the 'HIGH' region element.

The protein belongs to the class-I aminoacyl-tRNA synthetase family. As to quaternary structure, monomer.

It localises to the cytoplasm. It carries out the reaction tRNA(Arg) + L-arginine + ATP = L-arginyl-tRNA(Arg) + AMP + diphosphate. The protein is Arginine--tRNA ligase of Salmonella paratyphi B (strain ATCC BAA-1250 / SPB7).